The primary structure comprises 354 residues: uncharacterized protein (354 aa).

9 helical membrane-spanning segments follow: residues 9–29 (MGKI…LIFS), 31–51 (ISIN…ISFT), 76–96 (NFGI…LIWV), 109–129 (FLNV…AIVV), 144–164 (IIFS…VLLI), 185–205 (GILV…ALGV), 278–298 (YGTL…GFFY), 306–326 (GIYL…IESG), and 327–347 (ILDI…IYAI).

The protein localises to the cell membrane. This is an uncharacterized protein from Methanocaldococcus jannaschii (strain ATCC 43067 / DSM 2661 / JAL-1 / JCM 10045 / NBRC 100440) (Methanococcus jannaschii).